Reading from the N-terminus, the 136-residue chain is Riboflavin kinase (136 aa).

15–20 (GLGEGR) provides a ligand contact to CDP. Mg(2+)-binding residues include Thr44 and Asn46. FMN-binding residues include Thr103 and Glu111. Residue 116-119 (YYLR) coordinates CDP.

It belongs to the archaeal riboflavin kinase family. It depends on Mg(2+) as a cofactor.

It carries out the reaction riboflavin + CTP = CDP + FMN + H(+). The protein operates within cofactor biosynthesis; FMN biosynthesis; FMN from riboflavin (CTP route): step 1/1. Functionally, catalyzes the CTP-dependent phosphorylation of riboflavin (vitamin B2) to form flavin mononucleotide (FMN). This chain is Riboflavin kinase, found in Sulfurisphaera tokodaii (strain DSM 16993 / JCM 10545 / NBRC 100140 / 7) (Sulfolobus tokodaii).